A 1614-amino-acid chain; its full sequence is Adenylate cyclase type 10 (1614 aa).

2 consecutive Guanylate cyclase domains span residues valine 42–glutamine 179 and threonine 293–methionine 418. Positions 47 and 48 each coordinate Mg(2+). Aspartate 47–threonine 52 provides a ligand contact to ATP. Hydrogencarbonate is bound at residue lysine 95. Mg(2+) is bound at residue aspartate 99. ATP contacts are provided by aspartate 99 and lysine 144. The hydrogencarbonate site is built by valine 167, arginine 176, and methionine 337. ATP contacts are provided by residues valine 406 and asparagine 412–arginine 416.

This sequence belongs to the adenylyl cyclase class-4/guanylyl cyclase family. Mg(2+) serves as cofactor. Mn(2+) is required as a cofactor. Expressed in testis.

Its subcellular location is the cell membrane. It is found in the cytoplasm. The protein localises to the cytoskeleton. The protein resides in the perinuclear region. It localises to the nucleus. Its subcellular location is the cell projection. It is found in the cilium. The protein localises to the mitochondrion. The catalysed reaction is ATP = 3',5'-cyclic AMP + diphosphate. Its activity is regulated as follows. Activated by manganese or magnesium ions. In the presence of magnesium ions, the enzyme is activated by bicarbonate. Calcium mildly increases the enzyme activity, also in the presence of magnesium ions. Its function is as follows. Catalyzes the formation of the signaling molecule cAMP. May function as sensor that mediates responses to changes in cellular bicarbonate and CO(2) levels. Has a critical role in mammalian spermatogenesis by producing the cAMP which regulates cAMP-responsive nuclear factors indispensable for sperm maturation in the epididymis. Induces capacitation, the maturational process that sperm undergo prior to fertilization. Involved in ciliary beat regulation. The chain is Adenylate cyclase type 10 (Adcy10) from Mus musculus (Mouse).